The primary structure comprises 944 residues: Protein phosphatase 1 regulatory subunit 37 homolog (944 aa).

The tract at residues 42–71 (QQQSHSAATSVRKKTCQDANSSGEDPNGRI) is disordered. LRR repeat units lie at residues 203 to 224 (SCVRLNLSFNKQIDMRGWTTIF), 232 to 255 (SLQMLNLRYTNLNDRSIPALCKMA), 262 to 282 (SLTCLHLENTQMSGKNLLVLI), 290 to 311 (GLRELYLGDNGLQPTDGSHIYQ), and 318 to 338 (SLQLLDLRNNSIGDSGVRHIC). Positions 517–598 (EEGDSGVEKK…KERHQRFVRS (82 aa)) are disordered. The segment covering 522-542 (GVEKKDGNECEGEDNKDRQDT) has biased composition (basic and acidic residues). Polar residues-rich tracts occupy residues 543–554 (PAETENGVSSNE) and 567–585 (PESNNNEKSPLMASSSTSK). Over residues 586-595 (LSRKERHQRF) the composition is skewed to basic residues.

This sequence belongs to the PPP1R37 family.

This chain is Protein phosphatase 1 regulatory subunit 37 homolog, found in Caenorhabditis elegans.